The following is a 357-amino-acid chain: Arginine kinase Cal b 2.0101 (357 aa).

Residues Lys-9–Lys-91 enclose the Phosphagen kinase N-terminal domain. Gly-64–Tyr-68 serves as a coordination point for L-arginine. Residues Phe-119 to Met-356 form the Phosphagen kinase C-terminal domain. Residues Ser-122–Arg-126 and His-185 each bind ATP. The cysteines at positions 201 and 271 are disulfide-linked. Residue Glu-225 coordinates L-arginine. Arg-229 contributes to the ATP binding site. Cys-271 provides a ligand contact to L-arginine. Residues Arg-280–His-284 and Arg-309–Glu-314 each bind ATP. Position 314 (Glu-314) interacts with L-arginine.

It belongs to the ATP:guanido phosphotransferase family. In terms of tissue distribution, expressed in chela muscle (at protein level). Expressed in muscle.

It catalyses the reaction L-arginine + ATP = N(omega)-phospho-L-arginine + ADP + H(+). Catalyzes the reversible transfer of high energy ATP gamma-phosphate group to L-arginine. This chain is Arginine kinase Cal b 2.0101, found in Callinectes bellicosus (Warrior swimming crab).